The chain runs to 337 residues: Transaldolase (337 aa).

The Nuclear localization signal signature appears at 1–10; that stretch reads MSGSPVKRQR. Catalysis depends on Lys142, which acts as the Schiff-base intermediate with substrate. Residue Lys219 is modified to N6-acetyllysine. A phosphoserine mark is found at Ser237 and Ser256. Lys269, Lys286, and Lys321 each carry N6-acetyllysine.

The protein belongs to the transaldolase family. Type 1 subfamily. As to quaternary structure, homodimer. Interacts with KPNA1 and KPNA4.

Its subcellular location is the nucleus. The protein resides in the cytoplasm. The catalysed reaction is D-sedoheptulose 7-phosphate + D-glyceraldehyde 3-phosphate = D-erythrose 4-phosphate + beta-D-fructose 6-phosphate. Its pathway is carbohydrate degradation; pentose phosphate pathway; D-glyceraldehyde 3-phosphate and beta-D-fructose 6-phosphate from D-ribose 5-phosphate and D-xylulose 5-phosphate (non-oxidative stage): step 2/3. Functionally, catalyzes the rate-limiting step of the non-oxidative phase in the pentose phosphate pathway. Catalyzes the reversible conversion of sedheptulose-7-phosphate and D-glyceraldehyde 3-phosphate into erythrose-4-phosphate and beta-D-fructose 6-phosphate. The chain is Transaldolase (TALDO1) from Sus scrofa (Pig).